The chain runs to 1756 residues: RANBP2-like and GRIP domain-containing protein 2 (1756 aa).

Ser-21 is subject to Phosphoserine. 3 TPR repeats span residues 59-92, 583-616, and 647-680; these read PRAH…NPPQ, QKMG…LKII, and EDAH…VSYW. The interval 759–804 is disordered; that stretch reads GPLYKNGSLRNADSEIKHSTPSPTKYSLSPSKSYKYSPKTPPRWAE. Over residues 777–796 the composition is skewed to low complexity; sequence STPSPTKYSLSPSKSYKYSP. One can recognise a RanBD1 1 domain in the interval 1029–1165; the sequence is HFEPVVQMPE…FEECQRLLLD (137 aa). 2 disordered regions span residues 1206–1241 and 1299–1324; these read TKVT…TLEW and AKLN…ERDG. A compositionally biased stretch (polar residues) spans 1228–1237; it reads IKPNPENTGP. Residues 1310–1322 show a composition bias toward acidic residues; it reads TDEESDVTQEEER. The RanBD1 2 domain occupies 1326 to 1462; it reads YFEPVVPLPD…FDEAKTAQEK (137 aa). Over residues 1573-1586 the composition is skewed to polar residues; the sequence is NDSETSSVAQSGSE. Positions 1573–1614 are disordered; the sequence is NDSETSSVAQSGSESKVEPKKCELSKNSDIEQSSDSKVKNLS. Residues 1587-1610 show a composition bias toward basic and acidic residues; that stretch reads SKVEPKKCELSKNSDIEQSSDSKV. The 51-residue stretch at 1693-1743 folds into the GRIP domain; sequence QEESAANVEHLKNVLLQFIFLKPGSERESLLPVINTMLQLSPEEKGKLAAV.

The protein is RANBP2-like and GRIP domain-containing protein 2 (RGPD2) of Homo sapiens (Human).